Reading from the N-terminus, the 321-residue chain is Holliday junction branch migration complex subunit RuvB (321 aa).

The segment at 1–173 is large ATPase domain (RuvB-L); that stretch reads MMMEQECVDD…FGIISRLEFY (173 aa). ATP-binding positions include I12, R13, G54, K57, T58, T59, 120–122, R163, Y173, and R210; that span reads EDF. Residue T58 coordinates Mg(2+). The segment at 174-244 is small ATPAse domain (RuvB-S); it reads TPAELACIVK…LASDALARMD (71 aa). Residues 247-321 form a head domain (RuvB-H) region; it reads ELGLDQMDRK…KAYRHMNLLA (75 aa). The DNA site is built by R302 and R307.

The protein belongs to the RuvB family. In terms of assembly, homohexamer. Forms an RuvA(8)-RuvB(12)-Holliday junction (HJ) complex. HJ DNA is sandwiched between 2 RuvA tetramers; dsDNA enters through RuvA and exits via RuvB. An RuvB hexamer assembles on each DNA strand where it exits the tetramer. Each RuvB hexamer is contacted by two RuvA subunits (via domain III) on 2 adjacent RuvB subunits; this complex drives branch migration. In the full resolvosome a probable DNA-RuvA(4)-RuvB(12)-RuvC(2) complex forms which resolves the HJ.

The protein localises to the cytoplasm. The catalysed reaction is ATP + H2O = ADP + phosphate + H(+). The RuvA-RuvB-RuvC complex processes Holliday junction (HJ) DNA during genetic recombination and DNA repair, while the RuvA-RuvB complex plays an important role in the rescue of blocked DNA replication forks via replication fork reversal (RFR). RuvA specifically binds to HJ cruciform DNA, conferring on it an open structure. The RuvB hexamer acts as an ATP-dependent pump, pulling dsDNA into and through the RuvAB complex. RuvB forms 2 homohexamers on either side of HJ DNA bound by 1 or 2 RuvA tetramers; 4 subunits per hexamer contact DNA at a time. Coordinated motions by a converter formed by DNA-disengaged RuvB subunits stimulates ATP hydrolysis and nucleotide exchange. Immobilization of the converter enables RuvB to convert the ATP-contained energy into a lever motion, pulling 2 nucleotides of DNA out of the RuvA tetramer per ATP hydrolyzed, thus driving DNA branch migration. The RuvB motors rotate together with the DNA substrate, which together with the progressing nucleotide cycle form the mechanistic basis for DNA recombination by continuous HJ branch migration. Branch migration allows RuvC to scan DNA until it finds its consensus sequence, where it cleaves and resolves cruciform DNA. The sequence is that of Holliday junction branch migration complex subunit RuvB from Oleidesulfovibrio alaskensis (strain ATCC BAA-1058 / DSM 17464 / G20) (Desulfovibrio alaskensis).